A 109-amino-acid chain; its full sequence is uncharacterized protein (109 aa).

This is an uncharacterized protein from Caenorhabditis elegans.